We begin with the raw amino-acid sequence, 382 residues long: Anhydro-N-acetylmuramic acid kinase (382 aa).

Residue 9–16 (GTSLDGID) coordinates ATP.

The protein belongs to the anhydro-N-acetylmuramic acid kinase family.

It catalyses the reaction 1,6-anhydro-N-acetyl-beta-muramate + ATP + H2O = N-acetyl-D-muramate 6-phosphate + ADP + H(+). It functions in the pathway amino-sugar metabolism; 1,6-anhydro-N-acetylmuramate degradation. Its pathway is cell wall biogenesis; peptidoglycan recycling. In terms of biological role, catalyzes the specific phosphorylation of 1,6-anhydro-N-acetylmuramic acid (anhMurNAc) with the simultaneous cleavage of the 1,6-anhydro ring, generating MurNAc-6-P. Is required for the utilization of anhMurNAc either imported from the medium or derived from its own cell wall murein, and thus plays a role in cell wall recycling. The protein is Anhydro-N-acetylmuramic acid kinase of Bacillus cereus (strain G9842).